A 468-amino-acid polypeptide reads, in one-letter code: COBRA-like protein 5 (468 aa).

An N-terminal signal peptide occupies residues 1–22; that stretch reads MELHRCSLLALLLAVTCSVAVA. N-linked (GlcNAc...) asparagine glycosylation is found at N31, N156, N164, and N228. Residues 251–278 are disordered; that stretch reads GGGKNARAGDGRSRRNSGGGGGHSGGTE. 3 N-linked (GlcNAc...) asparagine glycosylation sites follow: N340, N355, and N374. A lipid anchor (GPI-anchor amidated asparagine) is attached at N443. Positions 444–468 are cleaved as a propeptide — removed in mature form; it reads SAPIGPPRSVAAAASAILVVLLLVA.

The protein belongs to the COBRA family. As to expression, expressed mainly in developing sclerenchyma cells and in vascular bundles.

The protein resides in the cell membrane. Involved in determining the orientation of cell expansion, probably by playing an important role in cellulose deposition. May act by recruiting cellulose synthesizing complexes to discrete positions on the cell surface. The protein is COBRA-like protein 5 (BC1) of Oryza sativa subsp. indica (Rice).